The chain runs to 152 residues: Antiholin-like protein LrgA (152 aa).

Transmembrane regions (helical) follow at residues 23 to 43, 45 to 65, 77 to 97, and 108 to 128; these read YSIFQQALTIAVILLISKIIE, FMPIPMPASVIGLVLLFIALC, VGTALTNNIGFLFVPAGISVI, and ILIILLIIISTLLLLICTGFA.

Belongs to the CidA/LrgA family. LrgA subfamily.

It is found in the cell membrane. Inhibits the expression or activity of extracellular murein hydrolases by interacting, possibly with LrgB, with the holin-like proteins CidA and/or CidB. The LrgAB and CidAB proteins may affect the proton motive force of the membrane. May be involved in programmed cell death (PCD), possibly triggering PCD in response to antibiotics and environmental stresses. The chain is Antiholin-like protein LrgA from Staphylococcus epidermidis (strain ATCC 35984 / DSM 28319 / BCRC 17069 / CCUG 31568 / BM 3577 / RP62A).